Reading from the N-terminus, the 365-residue chain is Aminomethyltransferase (365 aa).

Belongs to the GcvT family. In terms of assembly, the glycine cleavage system is composed of four proteins: P, T, L and H.

It catalyses the reaction N(6)-[(R)-S(8)-aminomethyldihydrolipoyl]-L-lysyl-[protein] + (6S)-5,6,7,8-tetrahydrofolate = N(6)-[(R)-dihydrolipoyl]-L-lysyl-[protein] + (6R)-5,10-methylene-5,6,7,8-tetrahydrofolate + NH4(+). Functionally, the glycine cleavage system catalyzes the degradation of glycine. The protein is Aminomethyltransferase of Chlorobaculum tepidum (strain ATCC 49652 / DSM 12025 / NBRC 103806 / TLS) (Chlorobium tepidum).